Here is a 92-residue protein sequence, read N- to C-terminus: Small ribosomal subunit protein uS19 (92 aa).

Belongs to the universal ribosomal protein uS19 family.

In terms of biological role, protein S19 forms a complex with S13 that binds strongly to the 16S ribosomal RNA. The chain is Small ribosomal subunit protein uS19 from Gloeobacter violaceus (strain ATCC 29082 / PCC 7421).